The primary structure comprises 346 residues: NADH-ubiquinone oxidoreductase chain 2 (346 aa).

Transmembrane regions (helical) follow at residues 1–21 (MSPYISPLFSITMIMSVMLIS), 26–46 (WVFMWLGLELGTLAFIPILVW), 60–80 (FIVQAMAAAVFFLGGMVSLSG), 96–116 (MMIMLAVVTKLGLAPFHYWVV), 122–142 (LNYIPGAVLLTWQKVPGLAVL), 151–171 (SSMLLLFGMVSALVGGLGGLG), 178–198 (LLAFSSISHLGWLVVGCVAGS), 199–219 (LLGLSYFTLYVILSIPLFSIL), 242–262 (VLLGVGFLSLGGLPPFFGFFG), 274–294 (LLLGVSVVLITGTLISLFYYL), and 320–340 (LSGLMSGLLVLNMLGLFLVGG).

This sequence belongs to the complex I subunit 2 family.

It localises to the mitochondrion inner membrane. The catalysed reaction is a ubiquinone + NADH + 5 H(+)(in) = a ubiquinol + NAD(+) + 4 H(+)(out). Functionally, core subunit of the mitochondrial membrane respiratory chain NADH dehydrogenase (Complex I) that is believed to belong to the minimal assembly required for catalysis. Complex I functions in the transfer of electrons from NADH to the respiratory chain. The immediate electron acceptor for the enzyme is believed to be ubiquinone. The sequence is that of NADH-ubiquinone oxidoreductase chain 2 (ND2) from Branchiostoma lanceolatum (Common lancelet).